Here is a 779-residue protein sequence, read N- to C-terminus: uncharacterized protein (779 aa).

The [4Fe-4S] cluster site is built by Cys-72 and Cys-75.

The protein belongs to the prokaryotic molybdopterin-containing oxidoreductase family. The cofactor is [4Fe-4S] cluster. Mo-bis(molybdopterin guanine dinucleotide) is required as a cofactor.

This is an uncharacterized protein from Mycobacterium bovis (strain ATCC BAA-935 / AF2122/97).